The sequence spans 69 residues: Putative membrane protein insertion efficiency factor (69 aa).

The protein belongs to the UPF0161 family.

It is found in the cell inner membrane. Its function is as follows. Could be involved in insertion of integral membrane proteins into the membrane. This is Putative membrane protein insertion efficiency factor from Azoarcus sp. (strain BH72).